The chain runs to 285 residues: Nucleotide-binding protein Avin_12760 (285 aa).

8-15 lines the ATP pocket; it reads GRSGSGKS. A GTP-binding site is contributed by 60 to 63; sequence DARN.

The protein belongs to the RapZ-like family.

Displays ATPase and GTPase activities. This chain is Nucleotide-binding protein Avin_12760, found in Azotobacter vinelandii (strain DJ / ATCC BAA-1303).